The chain runs to 804 residues: RasGAP-activating-like protein 1 (804 aa).

2 consecutive C2 domains span residues 1 to 105 (MAKS…DSWI) and 116 to 231 (VQGE…KGWF). D21, D27, D74, D76, D82, D149, D155, D202, D204, and D210 together coordinate Ca(2+). Residues 317–545 (GLAGRFLDYL…SRVRDFLDRL (229 aa)) enclose the Ras-GAP domain. The PH domain maps to 565–672 (AIVREGYLLK…WLSALRKASA (108 aa)). The segment at 674 to 710 (NPNKLAACHPGAFRSARWTCCLQAERSAAGCSRTHSA) adopts a Btk-type zinc-finger fold. Zn(2+) is bound by residues H682, C693, C694, and C704.

Ca(2+) serves as cofactor. In terms of tissue distribution, highly expressed in thyroid and adrenal medulla, lower expression in brain, spinal cord and trachea. Expressed in melanocytes.

Functionally, probable inhibitory regulator of the Ras-cyclic AMP pathway. Plays a role in dendrite formation by melanocytes. The chain is RasGAP-activating-like protein 1 from Homo sapiens (Human).